The sequence spans 393 residues: Cyclin CCL1 (393 aa).

Residues 1 to 19 (MTDIQLNGKSTLDTPSATM) show a composition bias toward polar residues. 2 disordered regions span residues 1–45 (MTDI…RISD) and 289–325 (SREG…SEEY). Basic and acidic residues-rich tracts occupy residues 21–35 (AKEK…DENN) and 300–321 (NEKE…KSTE).

This sequence belongs to the cyclin family. Cyclin C subfamily. In terms of assembly, CCL1 and KIN28 form the TFIIK complex, a component of TFIIH holo complex. Component of a complex consisting of KIN28, CCL1 and TFB3.

Its function is as follows. Regulatory component of the TFIIK complex (KIN28-CCL1 dimer) which is the protein kinase component of transcription factor IIH (TFIIH) and phosphorylates the C-terminal domain of RNA polymerase II during transition from transcription to elongation after preinitiation complex (PIC) formation, thereby positively regulating transcription. TFIIH (or factor B) is essential for both basal and activated transcription, and is involved in nucleotide excision repair (NER) of damaged DNA. TFIIH has DNA-dependent ATPase activity and is essential for polymerase II transcription in vitro. This chain is Cyclin CCL1 (CCL1), found in Saccharomyces cerevisiae (strain ATCC 204508 / S288c) (Baker's yeast).